The following is a 154-amino-acid chain: Fibroblast growth factor 2 (154 aa).

Positions 1–9 (MAAGSITSL) are excised as a propeptide. The disordered stretch occupies residues 1–20 (MAAGSITSLPALPEDGGGAF). Residue Asn-35 coordinates heparin. The residue at position 81 (Tyr-81) is a Phosphotyrosine; by TEC. Residue Lys-94 forms a Glycyl lysine isopeptide (Lys-Gly) (interchain with G-Cter in SUMO1) linkage. The heparin-binding stretch occupies residues 127 to 143 (KRTGQYKLGSKTGPGQK).

Belongs to the heparin-binding growth factors family. As to quaternary structure, monomer. Homodimer. Interacts with FGFR1, FGFR2, FGFR3 and FGFR4. Affinity between fibroblast growth factors (FGFs) and their receptors is increased by heparan sulfate glycosaminoglycans that function as coreceptors. Interacts with CSPG4, FGFBP1 and TEC. Found in a complex with FGFBP1, FGF1 and FGF2. Interacts with FGFBP3. Interacts with integrin ITGAV:ITGB3; the interaction is required for FGF2 signaling. Interacts with SNORC (via the extracellular domain). Interacts with GPC3. Post-translationally, phosphorylation at Tyr-81 regulates FGF2 unconventional secretion. In terms of tissue distribution, found in all tissues examined.

It localises to the secreted. Its subcellular location is the nucleus. In terms of biological role, acts as a ligand for FGFR1, FGFR2, FGFR3 and FGFR4. Also acts as an integrin ligand which is required for FGF2 signaling. Binds to integrin ITGAV:ITGB3. Plays an important role in the regulation of cell survival, cell division, cell differentiation and cell migration. Functions as a potent mitogen in vitro. Can induce angiogenesis. Mediates phosphorylation of ERK1/2 and thereby promotes retinal lens fiber differentiation. The sequence is that of Fibroblast growth factor 2 (Fgf2) from Rattus norvegicus (Rat).